The sequence spans 299 residues: pH-regulated antigen PRA1 (299 aa).

The N-terminal stretch at 1–15 is a signal peptide; it reads MNYLLFCLFFAFSVA. N-linked (GlcNAc...) asparagine glycosylation is found at Asn48, Asn89, Asn135, and Asn208. Positions 253 to 299 are disordered; it reads FEDSDSGSDSGASSTASSSHQHTDSNPSATTDANSHCHTHADGEVHC. The span at 259–272 shows a compositional bias: low complexity; it reads GSDSGASSTASSSH. Polar residues predominate over residues 278 to 288; the sequence is NPSATTDANSH.

It belongs to the ZPS1 family. As to quaternary structure, component of a multiprotein complex of 250 kDa composed of at least HYR1, MP65, and PRA1. Interacts with host Integrin alpha-M/beta-2 heterodimer. Also binds human factor H (CFH), CFHR1, plasminogen (PLG), complement C3, and C4BPA. Interacts with ZRT101. N- and O-glycosylated. The N- and 0-glycosidically linked carbohydrates represent 18 to 20 percent and 3 to 4 percent, respectively, of the molecular mass of PRA1. 0-linked sugar residues may be involved in the interaction with fibrinogen. Contributes highly to the carbohydrate component of the matrix. Treatment with tunicamycin impairs glycosylation.

It localises to the secreted. Functionally, cell surface protein involved in the host-parasite interaction during candidal infection. With MP65, represents a major component of the biofilm matrix. As a surface protein, binds the two human complement regulators CFH and CFHR1, as well as plasminogen PLG, mediates complement evasion and extra-cellular matrix interaction and/or degradation. As a released protein, enhances complement control in direct vicinity of the yeast and thus generates an additional protective layer which controls host complement attack, assisting the fungus in escaping host surveillance. Binds to host fluid-phase C3 and blocks cleavage of C3 to C3a and C3b, leading to inhibition of complement activation and protection from uptake of C.albicans by human macrophages. Also mediates human complement control and complement evasion through binding to C4BPA, another human complement inhibitor, as well as through binding to host integrin alpha-M/beta-2. Binds zinc from its environment and then reassociates with ZRT1 to acquire this essential metal. The protein is pH-regulated antigen PRA1 of Candida albicans (strain SC5314 / ATCC MYA-2876) (Yeast).